Consider the following 288-residue polypeptide: MARDPSHLPRACRPPAIPVRVAEAALEISRTAIEEQLKICGHKKDADVFELFLSQKELTEVIDLSRFKKLKYLWLHHNKLHGITFLTRNYCLAELYLNNNAIFDIEGLHYLPSLHILLLHHNELINLDATVKELKGMLNLKTLTLYQNPLCQYNLYRLYIIYHLPGVELLDRNQVTEKERRSMITLFNHKKAHIVQSIAFRGKVDASWDPRSPFKQKPAQRVPSDFAFANNVDKTMFDDPEDAVFVRSMKRSAMAITSLNWDTVPTREEKYLEEKDTGPAQMLTITLR.

LRR repeat units follow at residues 47 to 68 (DVFE…SRFK), 69 to 90 (KLKY…TRNY), 91 to 112 (CLAE…HYLP), and 113 to 134 (SLHI…VKEL). Positions 148-186 (NPLCQYNLYRLYIIYHLPGVELLDRNQVTEKERRSMITL) constitute an LRRCT domain.

The sequence is that of Leucine-rich repeat-containing protein 72 (LRRC72) from Bos taurus (Bovine).